Reading from the N-terminus, the 188-residue chain is Photosystem I assembly protein Ycf4 (188 aa).

2 helical membrane-spanning segments follow: residues 26 to 46 (YFWA…GLSS) and 68 to 88 (LVMG…WFVI).

It belongs to the Ycf4 family.

Its subcellular location is the cellular thylakoid membrane. Its function is as follows. Seems to be required for the assembly of the photosystem I complex. The sequence is that of Photosystem I assembly protein Ycf4 from Synechococcus elongatus (strain ATCC 33912 / PCC 7942 / FACHB-805) (Anacystis nidulans R2).